We begin with the raw amino-acid sequence, 301 residues long: Glycine--tRNA ligase alpha subunit (301 aa).

This sequence belongs to the class-II aminoacyl-tRNA synthetase family. In terms of assembly, tetramer of two alpha and two beta subunits.

The protein resides in the cytoplasm. The catalysed reaction is tRNA(Gly) + glycine + ATP = glycyl-tRNA(Gly) + AMP + diphosphate. The protein is Glycine--tRNA ligase alpha subunit of Neisseria meningitidis serogroup C (strain 053442).